We begin with the raw amino-acid sequence, 125 residues long: Scinderin (125 aa).

Tyrosine 13 carries the post-translational modification Phosphotyrosine. A 1,2-diacyl-sn-glycero-3-phospho-(1D-myo-inositol-4,5-bisphosphate) is bound by residues lysine 23–alanine 30 and arginine 49–arginine 57. The stretch at valine 59–leucine 99 is one Gelsolin-like 1 repeat.

Belongs to the villin/gelsolin family.

It is found in the cytoplasm. Its subcellular location is the cytoskeleton. The protein localises to the cell projection. The protein resides in the podosome. Ca(2+)-dependent actin filament-severing protein that has a regulatory function in exocytosis by affecting the organization of the microfilament network underneath the plasma membrane. In vitro, also has barbed end capping and nucleating activities in the presence of Ca(2+). Severing activity is inhibited by phosphatidylinositol 4,5-bis-phosphate (PIP2). Required for megakaryocyte differentiation, maturation, polyploidization and apoptosis with the release of platelet-like particles. Plays a role in osteoclastogenesis (OCG) and actin cytoskeletal organization in osteoclasts. Regulates chondrocyte proliferation and differentiation. Inhibits cell proliferation and tumorigenesis. Signaling is mediated by MAPK, p38 and JNK pathways. The polypeptide is Scinderin (SCIN) (Sus scrofa (Pig)).